The primary structure comprises 169 residues: MTRTDRLCVGAIAGAFGVKGEVRLKSFCAEPSDIASYGPLFTEDGGRSFRVTLTRPVAGALGARLSGVATKEEADALRGVQLYADRDRLPSLGDDEFYHADLIGLEVRDTGGALLGRVHAVHNHGAGDILEVTGAGRREALLLPFTRAVVPTVDLSIGRIVADPPEGLE.

The 75-residue stretch at 94–168 (DDEFYHADLI…RIVADPPEGL (75 aa)) folds into the PRC barrel domain.

Belongs to the RimM family. Binds ribosomal protein uS19.

It localises to the cytoplasm. Its function is as follows. An accessory protein needed during the final step in the assembly of 30S ribosomal subunit, possibly for assembly of the head region. Essential for efficient processing of 16S rRNA. May be needed both before and after RbfA during the maturation of 16S rRNA. It has affinity for free ribosomal 30S subunits but not for 70S ribosomes. In Cereibacter sphaeroides (strain ATCC 17025 / ATH 2.4.3) (Rhodobacter sphaeroides), this protein is Ribosome maturation factor RimM.